A 234-amino-acid chain; its full sequence is 3,4-dihydroxy-2-butanone 4-phosphate synthase (234 aa).

D-ribulose 5-phosphate-binding positions include 39–40 (RE), aspartate 44, 152–156 (RRGHT), and glutamate 176. Mg(2+) is bound at residue glutamate 40. Histidine 155 is a Mg(2+) binding site.

This sequence belongs to the DHBP synthase family. As to quaternary structure, homodimer. Mg(2+) serves as cofactor. Mn(2+) is required as a cofactor.

It catalyses the reaction D-ribulose 5-phosphate = (2S)-2-hydroxy-3-oxobutyl phosphate + formate + H(+). It functions in the pathway cofactor biosynthesis; riboflavin biosynthesis; 2-hydroxy-3-oxobutyl phosphate from D-ribulose 5-phosphate: step 1/1. Functionally, catalyzes the conversion of D-ribulose 5-phosphate to formate and 3,4-dihydroxy-2-butanone 4-phosphate. The polypeptide is 3,4-dihydroxy-2-butanone 4-phosphate synthase (Pelobacter propionicus (strain DSM 2379 / NBRC 103807 / OttBd1)).